The primary structure comprises 114 residues: Large ribosomal subunit protein bL20c (114 aa).

This sequence belongs to the bacterial ribosomal protein bL20 family.

Its subcellular location is the plastid. It is found in the chloroplast. In terms of biological role, binds directly to 23S ribosomal RNA and is necessary for the in vitro assembly process of the 50S ribosomal subunit. It is not involved in the protein synthesizing functions of that subunit. This chain is Large ribosomal subunit protein bL20c, found in Tetradesmus obliquus (Green alga).